The chain runs to 398 residues: Digeranylgeranylglycerophospholipid reductase (398 aa).

FAD is bound by residues alanine 15, glutamate 34, cysteine 45, alanine 46, glycine 48, arginine 99, alanine 123, aspartate 280, glycine 292, and isoleucine 293. Valine 372 provides a ligand contact to a 2,3-bis-O-(geranylgeranyl)-sn-glycerol 1-phospholipid.

This sequence belongs to the geranylgeranyl reductase family. DGGGPL reductase subfamily. FAD is required as a cofactor.

It catalyses the reaction a 2,3-bis-O-phytanyl-sn-glycerol 1-phospholipid + 8 oxidized 2[4Fe-4S]-[ferredoxin] = a 2,3-bis-O-(geranylgeranyl)-sn-glycerol 1-phospholipid + 8 reduced 2[4Fe-4S]-[ferredoxin] + 16 H(+). The catalysed reaction is 2,3-bis-O-(phytanyl)-sn-glycerol 1-phosphate + 8 oxidized 2[4Fe-4S]-[ferredoxin] = 2,3-bis-O-(geranylgeranyl)-sn-glycerol 1-phosphate + 8 reduced 2[4Fe-4S]-[ferredoxin] + 16 H(+). The enzyme catalyses a 2,3-bis-O-phytanyl-sn-glycerol 1-phospholipid + 8 A = a 2,3-bis-O-(geranylgeranyl)-sn-glycerol 1-phospholipid + 8 AH2. It carries out the reaction CDP-2,3-bis-O-(geranylgeranyl)-sn-glycerol + 8 AH2 = CDP-2,3-bis-O-(phytanyl)-sn-glycerol + 8 A. It catalyses the reaction archaetidylserine + 8 AH2 = 2,3-bis-O-phytanyl-sn-glycero-3-phospho-L-serine + 8 A. The protein operates within membrane lipid metabolism; glycerophospholipid metabolism. Functionally, is involved in the reduction of 2,3-digeranylgeranylglycerophospholipids (unsaturated archaeols) into 2,3-diphytanylglycerophospholipids (saturated archaeols) in the biosynthesis of archaeal membrane lipids. Catalyzes the formation of archaetidic acid (2,3-di-O-phytanyl-sn-glyceryl phosphate) from 2,3-di-O-geranylgeranylglyceryl phosphate (DGGGP) via the hydrogenation of each double bond of the isoprenoid chains. Is also probably able to reduce double bonds of geranyl groups in CDP-2,3-bis-O-(geranylgeranyl)-sn-glycerol and archaetidylserine, thus acting at various stages in the biosynthesis of archaeal membrane lipids. In Methanoculleus marisnigri (strain ATCC 35101 / DSM 1498 / JR1), this protein is Digeranylgeranylglycerophospholipid reductase.